The sequence spans 334 residues: Ribosomal lysine N-methyltransferase 5 (334 aa).

S-adenosyl-L-methionine contacts are provided by residues Trp88, 155–157 (GAG), Asp177, Trp227, and Met254.

Belongs to the class I-like SAM-binding methyltransferase superfamily. RKM5 family.

Functionally, S-adenosyl-L-methionine-dependent protein-lysine N-methyltransferase that methylates 60S ribosomal protein L1. This is Ribosomal lysine N-methyltransferase 5 (RKM5) from Lachancea thermotolerans (strain ATCC 56472 / CBS 6340 / NRRL Y-8284) (Yeast).